Consider the following 558-residue polypeptide: Eukaryotic translation initiation factor 3 subunit D (558 aa).

The interval 296–310 (EFDLLTVNETSVEPP) is RNA gate. The interval 534 to 558 (DNTFESEGEEEDSDEEEQVKDAFQR) is disordered. Residues 537–551 (FESEGEEEDSDEEEQ) are compositionally biased toward acidic residues.

It belongs to the eIF-3 subunit D family. As to quaternary structure, component of the eukaryotic translation initiation factor 3 (eIF-3) complex.

Its subcellular location is the cytoplasm. Functionally, mRNA cap-binding component of the eukaryotic translation initiation factor 3 (eIF-3) complex, which is involved in protein synthesis of a specialized repertoire of mRNAs and, together with other initiation factors, stimulates binding of mRNA and methionyl-tRNAi to the 40S ribosome. The eIF-3 complex specifically targets and initiates translation of a subset of mRNAs involved in cell proliferation. In the eIF-3 complex, eif3d specifically recognizes and binds the 7-methylguanosine cap of a subset of mRNAs. This Nasonia vitripennis (Parasitic wasp) protein is Eukaryotic translation initiation factor 3 subunit D.